Reading from the N-terminus, the 305-residue chain is 4-diphosphocytidyl-2-C-methyl-D-erythritol kinase (305 aa).

Lys10 is an active-site residue. 95 to 105 (PVTAGLGGGSS) lines the ATP pocket. Residue Asp136 is part of the active site. Residues 286-305 (PGVTPWRSPRSASSPSTKRS) are disordered. Residues 290–305 (PWRSPRSASSPSTKRS) show a composition bias toward low complexity.

This sequence belongs to the GHMP kinase family. IspE subfamily.

It carries out the reaction 4-CDP-2-C-methyl-D-erythritol + ATP = 4-CDP-2-C-methyl-D-erythritol 2-phosphate + ADP + H(+). Its pathway is isoprenoid biosynthesis; isopentenyl diphosphate biosynthesis via DXP pathway; isopentenyl diphosphate from 1-deoxy-D-xylulose 5-phosphate: step 3/6. In terms of biological role, catalyzes the phosphorylation of the position 2 hydroxy group of 4-diphosphocytidyl-2C-methyl-D-erythritol. This Anaeromyxobacter sp. (strain Fw109-5) protein is 4-diphosphocytidyl-2-C-methyl-D-erythritol kinase.